The primary structure comprises 194 residues: RNA polymerase II subunit A C-terminal domain phosphatase SSU72 like protein 6 (194 aa).

It belongs to the SSU72 phosphatase family.

The protein localises to the nucleus. The catalysed reaction is O-phospho-L-seryl-[protein] + H2O = L-seryl-[protein] + phosphate. The enzyme catalyses O-phospho-L-threonyl-[protein] + H2O = L-threonyl-[protein] + phosphate. Its function is as follows. Protein phosphatase that catalyzes the dephosphorylation of the C-terminal domain of RNA polymerase II. Plays a role in RNA processing and termination. This is RNA polymerase II subunit A C-terminal domain phosphatase SSU72 like protein 6 from Homo sapiens (Human).